The following is a 103-amino-acid chain: Large ribosomal subunit protein bL21 (103 aa).

The protein belongs to the bacterial ribosomal protein bL21 family. As to quaternary structure, part of the 50S ribosomal subunit. Contacts protein L20.

Functionally, this protein binds to 23S rRNA in the presence of protein L20. The polypeptide is Large ribosomal subunit protein bL21 (Chromohalobacter salexigens (strain ATCC BAA-138 / DSM 3043 / CIP 106854 / NCIMB 13768 / 1H11)).